A 1298-amino-acid chain; its full sequence is Ras guanine nucleotide exchange factor Q (1298 aa).

Disordered stretches follow at residues 1–26 (MDIN…INNF), 46–88 (NNNI…SIEG), 211–271 (NISN…GPLK), 314–384 (YTPP…QQQQ), and 459–533 (LSNG…STTT). Composition is skewed to low complexity over residues 211–245 (NISN…NSNN) and 315–384 (TPPS…QQQQ). Residues 352 to 389 (SSLNANNNTNNNNQQLQQQQQQQQQQQLQQQQQLTKSY) adopt a coiled-coil conformation. The span at 473-482 (LHLSTESTTS) shows a compositional bias: polar residues. Low complexity-rich tracts occupy residues 483–501 (NNNN…NNNN) and 508–533 (TTNS…STTT). An N-terminal Ras-GEF domain is found at 550–689 (DKDEVIAGER…YLKKAINDSG (140 aa)). The DEP domain occupies 723-801 (MSQSLQLKER…SSSSTTTTTT (79 aa)). 2 disordered regions span residues 781-864 (SKSG…PNSI) and 884-920 (GIAN…SNSF). Residues 783–864 (SGSSFSPSSS…ITSTSLPNSI (82 aa)) show a composition bias toward low complexity. A Ras-GEF domain is found at 964–1193 (HPVEIARQLT…YKASHMIEQP (230 aa)). The interval 1214–1267 (TTTTTNNLNNNNNNNNPNNNNNNNNNSANNKSSPSPSPSSSPITSSPISSLTIN) is disordered.

Functionally, promotes the exchange of Ras-bound GDP by GTP. Seems to play a role in chemotaxis. The sequence is that of Ras guanine nucleotide exchange factor Q (gefQ) from Dictyostelium discoideum (Social amoeba).